The primary structure comprises 126 residues: Diadenosine hexaphosphate hydrolase (126 aa).

In terms of domain architecture, Nudix hydrolase spans 1–121 (MELGAGGVVF…EDLGLLEVAL (121 aa)). Substrate contacts are provided by residues 21–23 (DRM) and 30–32 (KGH). The short motif at 31–52 (GHPEPGESLEEAAVREVWEETG) is the Nudix box element. Mg(2+) is bound by residues Glu46 and Glu50. Residues 66-68 (YVN), Arg74, and Glu112 each bind substrate.

Belongs to the Nudix hydrolase family. As to quaternary structure, monomer. The cofactor is Mg(2+).

The catalysed reaction is P(1),P(6)-bis(5'-adenosyl) hexaphosphate + H2O = 2 ATP + 2 H(+). It carries out the reaction P(1),P(5)-bis(5'-adenosyl) pentaphosphate + H2O = ADP + ATP + 2 H(+). The enzyme catalyses P(1),P(4)-bis(5'-adenosyl) tetraphosphate + H2O = AMP + ATP + 2 H(+). Strongly inhibited by fluoride ions. Its function is as follows. Specifically hydrolyzes (di)adenosine polyphosphates but not ATP or diadenosine triphosphate, generating ATP as the product. Diadenosine hexaphosphate (Ap6A) is the preferred substrate and hydrolysis yields 2 ATP. It is the only enzyme that symmetrically hydrolyzes Ap6A. It also hydrolyzes diadenosine pentaphosphate (Ap5A), diadenosine tetraphosphate (Ap4A) and adenosine tetraphosphate (p4A). This chain is Diadenosine hexaphosphate hydrolase, found in Thermus thermophilus.